Consider the following 707-residue polypeptide: Dendrin (707 aa).

Disordered stretches follow at residues 1–22, 67–86, 94–195, 213–273, and 342–377; these read MLDGPLFSEGPDSPRELQDEES, QNRTCRLRPGSPEPPPRRPW, ATNW…PWGG, AGTA…KKRL, and TEVALSGSTISSPPRPVPRSRQHLRGSRKGKEGSEE. Positions 103–134 form a coiled coil; the sequence is AEVRAREQEKRKAASQEREAKETERKRRKAGG. Over residues 105 to 127 the composition is skewed to basic and acidic residues; that stretch reads VRAREQEKRKAASQEREAKETER. Residues 113-131 form a nuclear localization region; sequence RKAASQEREAKETERKRRK. Positions 186-236 are interaction with MAGI2; it reads GVAWAGPWGGRRPGPPSYEAHLLLRGAAGTAPRRRWDRPPPYVAPPSYEGP. The interval 340–434 is interaction with ACTN1; sequence PVTEVALSGS…LEVWKVTRRA (95 aa). Residues 359–369 show a composition bias toward basic residues; sequence PRSRQHLRGSR. The residue at position 387 (serine 387) is a Phosphoserine. Disordered stretches follow at residues 389–421 and 517–707; these read KKPPVRHSQTLPRPWAPGGTGWKESLGQREGTE and RVLN…GKRE. The tract at residues 406-707 is interaction with CD2AP and NPHS1; that stretch reads GGTGWKESLG…TRKTPQGKRE (302 aa). Basic and acidic residues-rich tracts occupy residues 524–544 and 692–707; these read EGREFEAEGRQQGDSSLEERS and GLVREDTRKTPQGKRE.

In terms of assembly, forms a ternary complex with MAGI2 and SH3KBP1; recruits DDN to the cytoplasm. Interacts with MAGI1. Interacts with ACTN1 and may interact with WWC1. Interacts with the podocyte slit diaphragm proteins CD2AP, NPHS1 and NPHS2; the interaction with CD2AP and NPHS1 is direct. In terms of tissue distribution, specifically expressed in forebrain structures, particularly in neocortex, olfactory bulb, hippocampus, caudate-putamen, and limbic system (at protein level). Also detected in spleen, liver, kidney and placenta (at protein level).

It localises to the cell projection. The protein localises to the dendritic spine membrane. It is found in the cytoplasm. The protein resides in the endoplasmic reticulum membrane. Its subcellular location is the perikaryon. It localises to the nucleus. In terms of biological role, promotes apoptosis of kidney glomerular podocytes. Podocytes are highly specialized cells essential to the ultrafiltration of blood, resulting in the extraction of urine and the retention of protein. This chain is Dendrin (Ddn), found in Rattus norvegicus (Rat).